We begin with the raw amino-acid sequence, 1252 residues long: ABC transporter B family member 19 (1252 aa).

The N-linked (GlcNAc...) asparagine glycan is linked to Asn5. An ABC transmembrane type-1 1 domain is found at 41-330; the sequence is MFVGSLGAIV…SFSNLGAFSK (290 aa). The next 2 membrane-spanning stretches (helical) occupy residues 42-62 and 88-108; these read FVGSLGAIVHGSSMPVFFLLF and LYFVYLGLVVCFSSYAEIACW. Residue Asp136 participates in ATP binding. The next 4 membrane-spanning stretches (helical) occupy residues 163–183, 187–207, 274–294, and 308–328; these read VGNFIHYLSTFLAGLVVGFVS, LALLSVAVIPGIAFAGGLYAY, CTYGIACMSWALVFWYAGVFI, and IFSAIVGGMSLGQSFSNLGAF. Positions 276 and 283 each coordinate brassinolide. The ABC transporter 1 domain occupies 365–601; that stretch reads IEFKDVTFSY…SGAYASLIRF (237 aa). Tyr374, Ser376, Gly405, Lys406, Ser407, Thr408, and Glu529 together coordinate ATP. N-linked (GlcNAc...) asparagine glycosylation occurs at Asn641. An ABC transmembrane type-1 2 domain is found at 687-975; it reads SIMGAVGSIL…TVSLAPEIIR (289 aa). 2 consecutive transmembrane segments (helical) span residues 688–708 and 732–752; these read IMGAVGSILSGFIGPTFAIVM and FIYIGAGLYAVGAYLIQHYFF. Residue Asn758 is glycosylated (N-linked (GlcNAc...) asparagine). Asp780 is a binding site for ATP. 2 N-linked (GlcNAc...) asparagine glycosylation sites follow: Asn785 and Asn814. 3 consecutive transmembrane segments (helical) span residues 822-842, 914-934, and 949-969; these read FIVAFIVEWRVSLLILGTFPL, GFLFGLSQLALYGSEALILWY, and VIKVFVVLVITANSVAETVSL. Residues 965-1252 form an interaction with FKBP42/TWD1 region; that stretch reads ETVSLAPEII…RLLQLQTHRI (288 aa). In terms of domain architecture, ABC transporter 2 spans 1010–1246; it reads IEFRHVDFAY…PEGAYSRLLQ (237 aa). Positions 1019, 1021, 1022, 1051, 1052, and 1053 each coordinate ATP.

This sequence belongs to the ABC transporter superfamily. ABCB family. Multidrug resistance exporter (TC 3.A.1.201) subfamily. In terms of assembly, interacts with 1-naphthylphthalamic acid (NPA), and FKBP42/TWD1. Phosphorylated by PHOT1 in phototropic seedlings, to modulates auxin export and distribution and regulates leaf and petiole curling. In terms of tissue distribution, ubiquitous, mostly in shoot meristems. Present in the majority of stem cells, predominantly in a non-polar manner. Accumulates in seedlings roots and hypocotyls, and in roots apices and inflorescences.

Its subcellular location is the cell membrane. The enzyme catalyses (indol-3-yl)acetate(in) + ATP + H2O = (indol-3-yl)acetate(out) + ADP + phosphate + H(+). The catalysed reaction is brassinolide(in) + ATP + H2O = brassinolide(out) + ADP + phosphate + H(+). It catalyses the reaction 24-epi-brassinolide(in) + ATP + H2O = 24-epi-brassinolide(out) + ADP + phosphate + H(+). It carries out the reaction 24-epi-castasterone(in) + ATP + H2O = 24-epi-castasterone(out) + ADP + phosphate + H(+). The enzyme catalyses castasterone(in) + ATP + H2O = castasterone(out) + ADP + phosphate + H(+). Transport capacity is stimulated by the chaperone protein FKBP42/TWD1. ATPase activity is specifically activated by bioactive brassinosteroids in a dose-dependent manner, including brassinolide (BL), 24-epiBL and 24-epicastasterone (24-epiCS). Inhibited by vanadate. Brassinosteroid exporter that, in conjunction with ABCB1, supports the accumulation of exogenous brassinosteroids (BR) in the apoplast, thus promoting BR signaling initiation involving the specific receptor BRI1 and required for plant growth and stress responses. Mediates the transport of castasterone (CSA) and brassinolide (BL) across the plasma membrane. Auxin efflux transporter that acts as a negative regulator of light signaling to promote hypocotyl elongation by mediating leaf tip to petiole auxin flux. Required for the regulation of leaf position and morphology during PHOT1-mediated blue light responses involving auxin distribution, especially in low light fluence. Together with ABCB1 and in a FKBP42/TWD1-dependent manner, supports seed development by promoting stamen elongation and, to a lesser extent, anther dehiscence and pollen maturation, probably as auxin transporters. Contributes to the connective auxin transport (CAT) that ensures communication across the shoot system, including auxin loading at axillary bud apices to influence strigolactone-mediated bud outgrowth responses and shoot branching control. Mediates the accumulation of chlorophyll and anthocyanin, as well as the expression of genes in response to light. Participates in auxin efflux and thus regulates the polar auxin basipetal transport (from auxin-producing leaves to auxin-sensitive tissues, and from root tips to root elongating zone). Involved in diverse auxin-mediated responses including gravitropism, phototropism and lateral root formation. Required for the regulation of organ bending, such as gravitropic root bending. The sequence is that of ABC transporter B family member 19 from Arabidopsis thaliana (Mouse-ear cress).